Here is a 477-residue protein sequence, read N- to C-terminus: Methylenetetrahydrofolate--tRNA-(uracil-5-)-methyltransferase TrmFO (477 aa).

14–19 serves as a coordination point for FAD; sequence GGGLAG.

This sequence belongs to the MnmG family. TrmFO subfamily. The cofactor is FAD.

The protein localises to the cytoplasm. The catalysed reaction is uridine(54) in tRNA + (6R)-5,10-methylene-5,6,7,8-tetrahydrofolate + NADH + H(+) = 5-methyluridine(54) in tRNA + (6S)-5,6,7,8-tetrahydrofolate + NAD(+). The enzyme catalyses uridine(54) in tRNA + (6R)-5,10-methylene-5,6,7,8-tetrahydrofolate + NADPH + H(+) = 5-methyluridine(54) in tRNA + (6S)-5,6,7,8-tetrahydrofolate + NADP(+). In terms of biological role, catalyzes the folate-dependent formation of 5-methyl-uridine at position 54 (M-5-U54) in all tRNAs. The chain is Methylenetetrahydrofolate--tRNA-(uracil-5-)-methyltransferase TrmFO from Rhizobium johnstonii (strain DSM 114642 / LMG 32736 / 3841) (Rhizobium leguminosarum bv. viciae).